The primary structure comprises 152 residues: Protein CHLOROPLAST VESICULATION (152 aa).

A chloroplast-targeting transit peptide spans 1–22 (MAGRISCCLNLPPLDSNSAQSL). The chain crosses the membrane as a helical span at residues 48 to 65 (CSFVLGVAATVVIGGIQI). The interval 92–152 (RWSDKRTCPP…RVNRGGCFSV (61 aa)) is important for chloroplast destabilization and the formation of CV-containing vesicles.

In terms of assembly, interacts with the photosystem II subunit PsbO1 via its C-terminal region in the chloroplast thylakoid membrane and in CV-containing vesicles (CCVs). Mostly expressed in senescent and mature leaves but not in young leaves.

Its subcellular location is the plastid. The protein resides in the chloroplast membrane. It localises to the chloroplast thylakoid membrane. It is found in the chloroplast envelope. The protein localises to the vacuole. Its subcellular location is the vesicle. In terms of biological role, triggers stress-induced chloroplast degradation, independently of autophagy and senescence-associated vacuoles. After targeting to the chloroplast, triggers its destabilization and subsequent disassembly, inducing the formation of CV-containing vesicles (CCVs) carrying stromal proteins, envelope membrane proteins, and thylakoid membrane proteins which are released from the chloroplasts and mobilized to the vacuole for proteolysis. This Arabidopsis thaliana (Mouse-ear cress) protein is Protein CHLOROPLAST VESICULATION.